Consider the following 376-residue polypeptide: Tetraacyldisaccharide 4'-kinase (376 aa).

ATP is bound at residue 51 to 58; the sequence is AVGGTGKT.

It belongs to the LpxK family.

It carries out the reaction a lipid A disaccharide + ATP = a lipid IVA + ADP + H(+). Its pathway is glycolipid biosynthesis; lipid IV(A) biosynthesis; lipid IV(A) from (3R)-3-hydroxytetradecanoyl-[acyl-carrier-protein] and UDP-N-acetyl-alpha-D-glucosamine: step 6/6. Functionally, transfers the gamma-phosphate of ATP to the 4'-position of a tetraacyldisaccharide 1-phosphate intermediate (termed DS-1-P) to form tetraacyldisaccharide 1,4'-bis-phosphate (lipid IVA). The protein is Tetraacyldisaccharide 4'-kinase of Bacteroides fragilis (strain ATCC 25285 / DSM 2151 / CCUG 4856 / JCM 11019 / LMG 10263 / NCTC 9343 / Onslow / VPI 2553 / EN-2).